Here is a 329-residue protein sequence, read N- to C-terminus: uncharacterized protein (329 aa).

The SIS domain occupies 37–180; it reads LAEKILGHSG…AMLLFHSRGV (144 aa). 52–57 is a binding site for ATP; the sequence is GVGKSG. CBS domains are found at residues 206-265 and 274-329; these read MFPK…GGEV and MTAN…AGLL.

It belongs to the SIS family. GutQ/KpsF subfamily.

This is an uncharacterized protein from Chlamydia pneumoniae (Chlamydophila pneumoniae).